The primary structure comprises 432 residues: Cytoplasmic 60S subunit biogenesis factor REH1 (432 aa).

Residues 6-30 form a C2H2-type 1 zinc finger; the sequence is FTCNCCVIQFKTSDLQRYHMKTEWH. The interval 79-150 is disordered; it reads QSNALPQKQK…NTDYGEDTVS (72 aa). Positions 86 to 98 are enriched in basic residues; that stretch reads KQKKPIKSKRGRK. Basic and acidic residues predominate over residues 105 to 117; that stretch reads KRKDRDIAKEKQN. The segment covering 118–143 has biased composition (polar residues); sequence RSVSPSGSISSQLSNLTVGTENTNTD. C2H2-type zinc fingers lie at residues 186–209 and 237–261; these read TECI…FSEH and HNCL…SKRH.

This sequence belongs to the REI1 family. In terms of assembly, associates with nascent pre-60S particles that have not yet entered the translating pool, and is released from mature 60S subunits. Interacts with pre-60S factors NMD3, LSG1, and TIF6.

The protein resides in the cytoplasm. Functionally, pre-60S-associated cytoplasmic factor involved in the cytoplasmic maturation of the 60S subunit. May act redundantly with REI1 to directly promote a stabilizing structural rearrangement in cytoplasmic 60S subunit maturation independent on the REI1-specific ARX1 recycling. The sequence is that of Cytoplasmic 60S subunit biogenesis factor REH1 (REH1) from Saccharomyces cerevisiae (strain ATCC 204508 / S288c) (Baker's yeast).